Here is a 171-residue protein sequence, read N- to C-terminus: Large ribosomal subunit protein uL10 (171 aa).

It belongs to the universal ribosomal protein uL10 family. Part of the ribosomal stalk of the 50S ribosomal subunit. The N-terminus interacts with L11 and the large rRNA to form the base of the stalk. The C-terminus forms an elongated spine to which L12 dimers bind in a sequential fashion forming a multimeric L10(L12)X complex.

Forms part of the ribosomal stalk, playing a central role in the interaction of the ribosome with GTP-bound translation factors. The polypeptide is Large ribosomal subunit protein uL10 (Lactococcus lactis subsp. cremoris (strain SK11)).